The following is a 308-amino-acid chain: tRNA dimethylallyltransferase (308 aa).

Residue Gly9–Thr16 participates in ATP binding. Residue Thr11–Thr16 participates in substrate binding. Interaction with substrate tRNA stretches follow at residues Asp34 to Gln37 and Gln158 to Arg162.

The protein belongs to the IPP transferase family. Monomer. Mg(2+) is required as a cofactor.

It catalyses the reaction adenosine(37) in tRNA + dimethylallyl diphosphate = N(6)-dimethylallyladenosine(37) in tRNA + diphosphate. Its function is as follows. Catalyzes the transfer of a dimethylallyl group onto the adenine at position 37 in tRNAs that read codons beginning with uridine, leading to the formation of N6-(dimethylallyl)adenosine (i(6)A). The chain is tRNA dimethylallyltransferase from Maricaulis maris (strain MCS10) (Caulobacter maris).